A 156-amino-acid polypeptide reads, in one-letter code: Lipoprotein signal peptidase (156 aa).

Helical transmembrane passes span 52–72 (ILEG…IGIV) and 85–105 (FATA…DRIF). Catalysis depends on residues aspartate 111 and aspartate 129. Residues 121-141 (NFPIFNVADSALCVGVGILFL) traverse the membrane as a helical segment.

The protein belongs to the peptidase A8 family.

Its subcellular location is the cell membrane. The catalysed reaction is Release of signal peptides from bacterial membrane prolipoproteins. Hydrolyzes -Xaa-Yaa-Zaa-|-(S,diacylglyceryl)Cys-, in which Xaa is hydrophobic (preferably Leu), and Yaa (Ala or Ser) and Zaa (Gly or Ala) have small, neutral side chains.. Its pathway is protein modification; lipoprotein biosynthesis (signal peptide cleavage). Functionally, this protein specifically catalyzes the removal of signal peptides from prolipoproteins. The sequence is that of Lipoprotein signal peptidase from Halalkalibacterium halodurans (strain ATCC BAA-125 / DSM 18197 / FERM 7344 / JCM 9153 / C-125) (Bacillus halodurans).